The chain runs to 1039 residues: Probable inorganic carbon transporter subunit DabA 2 (1039 aa).

Zn(2+) contacts are provided by Cys-462, Asp-464, His-721, and Cys-736.

Belongs to the inorganic carbon transporter (TC 9.A.2) DabA family. Forms a complex with DabB. It depends on Zn(2+) as a cofactor.

The protein localises to the cell inner membrane. Functionally, part of an energy-coupled inorganic carbon pump. This chain is Probable inorganic carbon transporter subunit DabA 2, found in Nitrobacter hamburgensis (strain DSM 10229 / NCIMB 13809 / X14).